The sequence spans 399 residues: uncharacterized protein (399 aa).

Residues 1–8 (MHNLQVRR) are Cytoplasmic-facing. Residues 9-35 (HYAALKGFYLFAFLGTGSIIPLLSMYL) traverse the membrane as a helical segment. Residues 36–42 (TKEQHLS) are Extracellular-facing. Residues 43–71 (GSQVGLIMSLGPIVMIFFQPFWGMLSDYT) traverse the membrane as a helical segment. The Cytoplasmic segment spans residues 72 to 75 (QKTK). Residues 76–101 (GLLAVCTSITGIIGLAYIAFDSFPLF) form a helical membrane-spanning segment. The Extracellular segment spans residues 102–105 (ILIA). Residues 106–123 (ACFAAFQSTIIPLSDSIS) traverse the membrane as a helical segment. Residues 124 to 134 (LRYTQETNGNY) lie on the Cytoplasmic side of the membrane. A helical transmembrane segment spans residues 135 to 157 (GGIRLFGSLGFGVAVFAMGQVTN). Residues 158-160 (QLY) lie on the Extracellular side of the membrane. Residues 161–180 (PIHVIFIFGCAFLCIAAILA) traverse the membrane as a helical segment. Topologically, residues 181 to 210 (SQVPGQQKTTKVNIRKGFRELISNKTFLIF) are cytoplasmic. Residues 211-230 (MIITFTTFAPNLANNTYFSL) form a helical membrane-spanning segment. The Extracellular portion of the chain corresponds to 231–234 (FLDK). Residues 235 to 259 (SGASLSAIGILFFIGVISEIPFMRF) form a helical membrane-spanning segment. The Cytoplasmic segment spans residues 260-269 (AQTFIDKMGL). The helical transmembrane segment at 270-289 (LNVIMLSGGVSLFRWALYFT) threads the bilayer. At 290-292 (APS) the chain is on the extracellular side. Residues 293–315 (LWIIYATVFLQGVAIGLFIPAAL) form a helical membrane-spanning segment. Over 316-327 (QYVKKITPRHVE) the chain is Cytoplasmic. The helical transmembrane segment at 328-355 (ATALTMYAAIGNGFGNWFCTFAGGYIFD) threads the bilayer. The Extracellular portion of the chain corresponds to 356–358 (YVS). Residues 359–379 (IFAVYLLFGILSIAGFGLTLY) form a helical membrane-spanning segment. Topologically, residues 380 to 399 (LMKAEKNKHTLHQPAVTFKP) are cytoplasmic.

This sequence belongs to the major facilitator superfamily.

It is found in the cell membrane. This is an uncharacterized protein from Bacillus subtilis (strain 168).